The following is a 199-amino-acid chain: dITP/XTP pyrophosphatase (199 aa).

7 to 12 (SNNPGK) contacts substrate. Asp68 functions as the Proton acceptor in the catalytic mechanism. Residue Asp68 coordinates Mg(2+). Substrate-binding positions include Ala69, 154-157 (FGFD), Lys177, and 182-183 (HR).

This sequence belongs to the HAM1 NTPase family. In terms of assembly, homodimer. The cofactor is Mg(2+).

It catalyses the reaction XTP + H2O = XMP + diphosphate + H(+). It carries out the reaction dITP + H2O = dIMP + diphosphate + H(+). The enzyme catalyses ITP + H2O = IMP + diphosphate + H(+). Functionally, pyrophosphatase that catalyzes the hydrolysis of nucleoside triphosphates to their monophosphate derivatives, with a high preference for the non-canonical purine nucleotides XTP (xanthosine triphosphate), dITP (deoxyinosine triphosphate) and ITP. Seems to function as a house-cleaning enzyme that removes non-canonical purine nucleotides from the nucleotide pool, thus preventing their incorporation into DNA/RNA and avoiding chromosomal lesions. This Verminephrobacter eiseniae (strain EF01-2) protein is dITP/XTP pyrophosphatase.